The sequence spans 30 residues: Cyclotide hyen-L (30 aa).

The cyclopeptide (Gly-Asn) cross-link spans 1–30 (GIPCAESCVYIPCTVTALLGCSCSDKVCYN). Disulfide bonds link Cys-4/Cys-21, Cys-8/Cys-23, and Cys-13/Cys-28.

Post-translationally, this is a cyclic peptide. Detected in stems (at protein level).

In terms of biological role, probably participates in a plant defense mechanism. Has cytotoxic activity against HUVEC cells (LC(50)= 2.26 uM) and various cancer cells including HeLa (LC(50)= 3.48 uM), MCF-7 and K562. Displays very weak hemolytic activity. Binds to and induces leakage in phospholipd membranes, particularly ones containing 1-palmitoyl-2-oleophosphatidylethanolamine (POPE). The protein is Cyclotide hyen-L of Pigea enneasperma (Spade flower).